We begin with the raw amino-acid sequence, 288 residues long: Quinate/shikimate dehydrogenase (288 aa).

Residues Lys71 and Asp107 each coordinate substrate. Residues 132–135 (AGGA), 155–158 (NRRD), Lys205, 232–235 (CVYN), and Gly255 each bind NAD(+).

The protein belongs to the shikimate dehydrogenase family. As to quaternary structure, homodimer.

It carries out the reaction L-quinate + NAD(+) = 3-dehydroquinate + NADH + H(+). The catalysed reaction is L-quinate + NADP(+) = 3-dehydroquinate + NADPH + H(+). It catalyses the reaction shikimate + NADP(+) = 3-dehydroshikimate + NADPH + H(+). The enzyme catalyses shikimate + NAD(+) = 3-dehydroshikimate + NADH + H(+). The protein operates within metabolic intermediate biosynthesis; chorismate biosynthesis; chorismate from D-erythrose 4-phosphate and phosphoenolpyruvate: step 4/7. The actual biological function of YdiB remains unclear, nor is it known whether 3-dehydroshikimate or quinate represents the natural substrate. Catalyzes the reversible NAD-dependent reduction of both 3-dehydroshikimate (DHSA) and 3-dehydroquinate to yield shikimate (SA) and quinate, respectively. It can use both NAD or NADP for catalysis, however it has higher catalytic efficiency with NAD. This chain is Quinate/shikimate dehydrogenase, found in Escherichia coli O139:H28 (strain E24377A / ETEC).